Consider the following 469-residue polypeptide: MAAMDTESAPLTLESLPTDPLLLILSFLDYRDLINCCYVSRRLSQLSSHDPLWRRHCKKYWLISEEEKTQKNQCWKSLFIDTYSDVGRYIDHYAAIKKAWDDLKKYLEPRCPRMVLSLKEGAREEDLDAVEAQIGCKLPDDYRCSYRIHNGQKLVVPGLLGSMALSNHYRSEDLLDVDTAAGGFQQRQGLKSCLPLTFCIHTGLSQYIAVEAAEGRNKNEVFYQCPDQMARNPAAIDMFIIGATFTDWFTSYVNSVVSGGFPIIRDQIFRYVHDPECVATTGDITVSVSTSFLPELSSVHPPHYFFTYRIRIEMSKDALPEKACQLDSRYWRITNAKGDVEEVQGPGVVGEFPIISPGRVYEYTSCTTFSTTSGYMEGYYTFHFLYFKDKIFNVAIPRFHMACPTFRVSIARLEMGPDEYEEMEEEEEEEEEEDDDDSADMDESDDDEEERQRRVFDVPIRRRRCSRLF.

One can recognise an F-box domain in the interval 10–56 (PLTLESLPTDPLLLILSFLDYRDLINCCYVSRRLSQLSSHDPLWRRH). The ApaG domain occupies 278-408 (VATTGDITVS…FHMACPTFRV (131 aa)). Over residues 419 to 449 (EYEEMEEEEEEEEEEDDDDSADMDESDDDEE) the composition is skewed to acidic residues. Residues 419-454 (EYEEMEEEEEEEEEEDDDDSADMDESDDDEEERQRR) are disordered.

Part of a SCF (SKP1-cullin-F-box) protein ligase complex SCF(FBXO3) consisting of FBXO3, SKP1, CUL1 and RBX1. Interacts with PML, interaction is direct and takes place either alone or within the SCF complex.

The protein localises to the nucleus. It participates in protein modification; protein ubiquitination. Functionally, substrate recognition component of the SCF (SKP1-CUL1-F-box protein)-type E3 ubiquitin ligase complex, SCF(FBXO3), which mediates the ubiquitination and subsequent proteasomal degradation of target proteins. Mediates the ubiquitination of HIPK2 and probably that of EP300, leading to rapid degradation by the proteasome. In the presence of PML, HIPK2 ubiquitination still occurs, but degradation is prevented. PML, HIPK2 and FBXO3 may act synergically to activate p53/TP53-dependent transactivation. The SCF(FBXO3) also acts as a regulator of inflammation by mediating ubiquitination and degradation of FBXL2 in response to lipopolysaccharide (LPS). The SCF(FBXO3) complex specifically recognizes FBXL2 phosphorylated at 'Thr-404' and promotes its ubiquitination. The sequence is that of F-box only protein 3 (FBXO3) from Bos taurus (Bovine).